Consider the following 72-residue polypeptide: Large ribosomal subunit protein uL29 (72 aa).

This sequence belongs to the universal ribosomal protein uL29 family. Part of the 50S ribosomal subunit.

The chain is Large ribosomal subunit protein uL29 from Pyrococcus furiosus (strain ATCC 43587 / DSM 3638 / JCM 8422 / Vc1).